The primary structure comprises 508 residues: Phytepsin (508 aa).

An N-terminal signal peptide occupies residues 1–27 (MGTRGLALALLAAVLLLQTVLPAASEA). The propeptide at 28 to 66 (EGLVRIALKKRPIDRNSRVATGLSGGEEQPLLSGANPLR) is activation peptide. The region spanning 84-505 (YFGEIGVGTP…DYGKLRIGFA (422 aa)) is the Peptidase A1 domain. Asp-102 is a catalytic residue. Cystine bridges form between Cys-115–Cys-121 and Cys-280–Cys-284. Residue Asp-289 is part of the active site. A Saposin B-type domain is found at 314–419 (VVSQECKTIV…NQLCNRLPSP (106 aa)). Intrachain disulfides connect Cys-319–Cys-413, Cys-344–Cys-385, Cys-350–Cys-382, and Cys-427–Cys-464. Asn-399 carries an N-linked (GlcNAc...) asparagine glycan.

The protein belongs to the peptidase A1 family. As to quaternary structure, heterodimer of two subunits (29 kDa and 11 kDa) processed from the precursor molecule. A large enzyme (32 kDa and 16 kDa) is an intermediate precursor form. As to expression, embryo and leaf.

It localises to the vacuole. The enzyme catalyses Prefers hydrophobic residues Phe, Val, Ile, Leu, and Ala at P1 and P1', but also cleaves -Phe-|-Asp- and -Asp-|-Asp- bonds in 2S albumin from plant seeds.. Its function is as follows. Involved in the breakdown of propeptides of storage proteins in protein-storage vacuoles. This is Phytepsin from Hordeum vulgare (Barley).